A 308-amino-acid chain; its full sequence is Aspartate carbamoyltransferase catalytic subunit (308 aa).

The carbamoyl phosphate site is built by Arg59 and Thr60. Residue Lys87 coordinates L-aspartate. Residues Arg109, His139, and Gln142 each coordinate carbamoyl phosphate. L-aspartate-binding residues include Arg172 and Arg224. The carbamoyl phosphate site is built by Ala265 and Pro266.

It belongs to the aspartate/ornithine carbamoyltransferase superfamily. ATCase family. As to quaternary structure, heterododecamer (2C3:3R2) of six catalytic PyrB chains organized as two trimers (C3), and six regulatory PyrI chains organized as three dimers (R2).

It catalyses the reaction carbamoyl phosphate + L-aspartate = N-carbamoyl-L-aspartate + phosphate + H(+). It participates in pyrimidine metabolism; UMP biosynthesis via de novo pathway; (S)-dihydroorotate from bicarbonate: step 2/3. Functionally, catalyzes the condensation of carbamoyl phosphate and aspartate to form carbamoyl aspartate and inorganic phosphate, the committed step in the de novo pyrimidine nucleotide biosynthesis pathway. The protein is Aspartate carbamoyltransferase catalytic subunit of Enterococcus faecalis (strain ATCC 700802 / V583).